A 251-amino-acid chain; its full sequence is 4-hydroxy-tetrahydrodipicolinate reductase (251 aa).

NAD(+) contacts are provided by residues 9–14 (GCNGKM), 85–87 (ATT), and 109–112 (SANM). The active-site Proton donor/acceptor is the H141. H142 serves as a coordination point for (S)-2,3,4,5-tetrahydrodipicolinate. Catalysis depends on K145, which acts as the Proton donor. 151–152 (GT) is a binding site for (S)-2,3,4,5-tetrahydrodipicolinate.

The protein belongs to the DapB family.

It is found in the cytoplasm. The catalysed reaction is (S)-2,3,4,5-tetrahydrodipicolinate + NAD(+) + H2O = (2S,4S)-4-hydroxy-2,3,4,5-tetrahydrodipicolinate + NADH + H(+). It catalyses the reaction (S)-2,3,4,5-tetrahydrodipicolinate + NADP(+) + H2O = (2S,4S)-4-hydroxy-2,3,4,5-tetrahydrodipicolinate + NADPH + H(+). The protein operates within amino-acid biosynthesis; L-lysine biosynthesis via DAP pathway; (S)-tetrahydrodipicolinate from L-aspartate: step 4/4. In terms of biological role, catalyzes the conversion of 4-hydroxy-tetrahydrodipicolinate (HTPA) to tetrahydrodipicolinate. The protein is 4-hydroxy-tetrahydrodipicolinate reductase of Caldanaerobacter subterraneus subsp. tengcongensis (strain DSM 15242 / JCM 11007 / NBRC 100824 / MB4) (Thermoanaerobacter tengcongensis).